Consider the following 170-residue polypeptide: Large ribosomal subunit protein uL15 (170 aa).

The span at 1–12 shows a compositional bias: basic and acidic residues; sequence MKLHDLRPAEGS. Residues 1–50 form a disordered region; it reads MKLHDLRPAEGSHRKRKRIGRGHGSGKVKTGGKGMMGQKARSGPGPYRTF. A compositionally biased stretch (basic residues) spans 13-26; it reads HRKRKRIGRGHGSG.

This sequence belongs to the universal ribosomal protein uL15 family. In terms of assembly, part of the 50S ribosomal subunit.

Binds to the 23S rRNA. This Chloroflexus aggregans (strain MD-66 / DSM 9485) protein is Large ribosomal subunit protein uL15.